The sequence spans 310 residues: p-hydroxybenzoic acid efflux pump subunit AaeA (310 aa).

A helical membrane pass occupies residues 12-32; it reads AITVVLVILAFIAIFNAWVYY.

Belongs to the membrane fusion protein (MFP) (TC 8.A.1) family.

The protein resides in the cell inner membrane. Functionally, forms an efflux pump with AaeB. This Escherichia coli O8 (strain IAI1) protein is p-hydroxybenzoic acid efflux pump subunit AaeA.